A 274-amino-acid polypeptide reads, in one-letter code: Prolyl 4-hydroxylase 13 (274 aa).

The Cytoplasmic segment spans residues 1-10 (MRSYGKEKKL). Residues 11–31 (VFPYVFIACCFFLAIFGFCFF) traverse the membrane as a helical; Signal-anchor for type II membrane protein segment. Topologically, residues 32–274 (NLFSQGISFS…TKWIRDQTYD (243 aa)) are lumenal. A Fe2OG dioxygenase domain is found at 151–270 (YYESFNILRY…KWVATKWIRD (120 aa)). Positions 169 and 171 each coordinate Fe cation. Asparagine 242 is a glycosylation site (N-linked (GlcNAc...) asparagine). Histidine 251 provides a ligand contact to Fe cation. Residue lysine 261 coordinates 2-oxoglutarate.

Belongs to the P4HA family. Requires Fe(2+) as cofactor. The cofactor is L-ascorbate. As to expression, expressed in epidermal root hair cells (trichoblasts) root hairless cells (atrichoblasts).

It localises to the endoplasmic reticulum membrane. It catalyses the reaction L-prolyl-[collagen] + 2-oxoglutarate + O2 = trans-4-hydroxy-L-prolyl-[collagen] + succinate + CO2. Functionally, catalyzes the post-translational formation of 4-hydroxyproline in -Xaa-Pro-Gly- sequences in proline-rich peptide sequences of plant glycoproteins and other proteins. Hydroxyprolines are important constituent of many plant cell wall glycoproteins such as extensins, hydroxyproline-rich glycoproteins, lectins and arabinogalactan proteins. Possesses high affinity for leucine-rich repeat and proline-rich extensins of root cell walls that are essential for root hair development. Hydroxyprolines define the subsequent O-glycosylation sites by arabinosyltransferases which elongate the O-arabinosides on extensins. This chain is Prolyl 4-hydroxylase 13, found in Arabidopsis thaliana (Mouse-ear cress).